The following is a 105-amino-acid chain: Ketoisovalerate oxidoreductase subunit VorD (105 aa).

4Fe-4S ferredoxin-type domains follow at residues 44-73 (FMPVIDESKCVKCYICWKYCPEPAIYIKED) and 74-103 (GFVAIDYDYCKGCGICANECPTKAITMVRE). Residues Cys-53, Cys-56, Cys-59, Cys-63, Cys-83, Cys-86, Cys-89, and Cys-93 each coordinate [4Fe-4S] cluster.

In terms of assembly, heterotetramer of one alpha, one beta, one delta and one gamma chain. [4Fe-4S] cluster serves as cofactor.

It catalyses the reaction 3-methyl-2-oxobutanoate + 2 oxidized [2Fe-2S]-[ferredoxin] + CoA = 2-methylpropanoyl-CoA + 2 reduced [2Fe-2S]-[ferredoxin] + CO2 + H(+). The protein is Ketoisovalerate oxidoreductase subunit VorD (vorD) of Pyrococcus horikoshii (strain ATCC 700860 / DSM 12428 / JCM 9974 / NBRC 100139 / OT-3).